The sequence spans 631 residues: Squalene--hopene cyclase (631 aa).

3 PFTB repeats span residues Leu15 to Val56, Met61 to Gly102, and Glu241 to Ala282. Catalysis depends on Asp376, which acts as the Proton donor. PFTB repeat units lie at residues Met400–Thr441, Ile468–Gly508, Ile516–Ala557, and Ala574–Gly622.

Belongs to the terpene cyclase/mutase family. Homodimer.

The protein resides in the cell membrane. The enzyme catalyses squalene = hop-22(29)-ene. It carries out the reaction squalene + H2O = hopan-22-ol. It functions in the pathway secondary metabolite biosynthesis; hopanoid biosynthesis. Its function is as follows. Catalyzes the cyclization of squalene to two pentacyclic triterpenes, hop-22(29)-ene and hopan-22-ol (diplopterol); hopene and hopanol are formed at a constant ratio of 5:1. Is a key enzyme of hopanoid biosynthesis; hopanoids are components of the bacterial cytoplasmic membranes that play a vital role in stabilizing the membranes. The protein is Squalene--hopene cyclase (shc) of Alicyclobacillus acidocaldarius subsp. acidocaldarius (strain ATCC 27009 / DSM 446 / BCRC 14685 / JCM 5260 / KCTC 1825 / NBRC 15652 / NCIMB 11725 / NRRL B-14509 / 104-IA) (Bacillus acidocaldarius).